We begin with the raw amino-acid sequence, 250 residues long: 23S rRNA (guanine(2535)-N(1))-methyltransferase (250 aa).

The enzyme catalyses guanosine(2535) in 23S rRNA + S-adenosyl-L-methionine = N(1)-methylguanosine(2535) in 23S rRNA + S-adenosyl-L-homocysteine + H(+). Its function is as follows. Specifically methylates the guanine-2535 in 23S ribosomal RNA. Confers resistance to antibiotic avilamycin, an orthosomycin antibiotic. The polypeptide is 23S rRNA (guanine(2535)-N(1))-methyltransferase (aviRa) (Streptomyces viridochromogenes).